The sequence spans 81 residues: RNA-binding protein Hfq (81 aa).

The region spanning 10–70 (DLFLNSVRKS…ISTIMPSQPV (61 aa)) is the Sm domain.

It belongs to the Hfq family. In terms of assembly, homohexamer.

RNA chaperone that binds small regulatory RNA (sRNAs) and mRNAs to facilitate mRNA translational regulation in response to envelope stress, environmental stress and changes in metabolite concentrations. Also binds with high specificity to tRNAs. This chain is RNA-binding protein Hfq, found in Mesorhizobium japonicum (strain LMG 29417 / CECT 9101 / MAFF 303099) (Mesorhizobium loti (strain MAFF 303099)).